Consider the following 360-residue polypeptide: MPKKILFTGGGTVGHVTLNLILIPKFIKDGWEVHYIGDKNGIEHIEIEKSGLDVTFHAIATGKLRRYFSWQNLADVFKVALGLLQSLFIVAKLRPQALFSKGGFVSVPPVVAAKLLGKPVFIHESDRSMGLANKIAYKFATTMYTTFEQEDQLSKVKHLGAVTKVFKDANQMPESTQLEAVKEYFSRDLKTLLFIGGSAGAHVFNQFISDHPELKQRYNIINITGDPHLNELSSHLYRVDYVTDLYQPLIAMADLVVTRGGSNTLFELLAMAKLHLIVPLGKEASRGDQLENATYFEKRGYAKQLQEPDLTLHNFDQAMADLFEHQADYEATMLATKEIQSPDFFYDLLRADISSAIKEK.

2 residues coordinate UDP-N-acetyl-alpha-D-glucosamine: Ser198 and Gln289.

The protein belongs to the glycosyltransferase 28 family. MurG subfamily.

The protein resides in the cell membrane. It carries out the reaction Mur2Ac(oyl-L-Ala-gamma-D-Glu-L-Lys-D-Ala-D-Ala)-di-trans,octa-cis-undecaprenyl diphosphate + UDP-N-acetyl-alpha-D-glucosamine = beta-D-GlcNAc-(1-&gt;4)-Mur2Ac(oyl-L-Ala-gamma-D-Glu-L-Lys-D-Ala-D-Ala)-di-trans,octa-cis-undecaprenyl diphosphate + UDP + H(+). Its pathway is cell wall biogenesis; peptidoglycan biosynthesis. Its function is as follows. Cell wall formation. Catalyzes the transfer of a GlcNAc subunit on undecaprenyl-pyrophosphoryl-MurNAc-pentapeptide (lipid intermediate I) to form undecaprenyl-pyrophosphoryl-MurNAc-(pentapeptide)GlcNAc (lipid intermediate II). This is UDP-N-acetylglucosamine--N-acetylmuramyl-(pentapeptide) pyrophosphoryl-undecaprenol N-acetylglucosamine transferase from Streptococcus pyogenes serotype M3 (strain SSI-1).